The following is a 59-amino-acid chain: SPbeta prophage-derived uncharacterized protein YosB (59 aa).

In Bacillus subtilis (strain 168), this protein is SPbeta prophage-derived uncharacterized protein YosB (yosB).